Consider the following 425-residue polypeptide: 5-methylthioadenosine/S-adenosylhomocysteine deaminase (425 aa).

Residues His-63 and His-65 each coordinate Zn(2+). Substrate contacts are provided by Glu-92 and His-184. Residue His-211 participates in Zn(2+) binding. Substrate contacts are provided by Glu-214 and Asp-299. A Zn(2+)-binding site is contributed by Asp-299.

Belongs to the metallo-dependent hydrolases superfamily. MTA/SAH deaminase family. Zn(2+) is required as a cofactor.

It carries out the reaction S-adenosyl-L-homocysteine + H2O + H(+) = S-inosyl-L-homocysteine + NH4(+). The catalysed reaction is S-methyl-5'-thioadenosine + H2O + H(+) = S-methyl-5'-thioinosine + NH4(+). Its function is as follows. Catalyzes the deamination of 5-methylthioadenosine and S-adenosyl-L-homocysteine into 5-methylthioinosine and S-inosyl-L-homocysteine, respectively. Is also able to deaminate adenosine. The sequence is that of 5-methylthioadenosine/S-adenosylhomocysteine deaminase from Pyrococcus abyssi (strain GE5 / Orsay).